A 40-amino-acid polypeptide reads, in one-letter code: Ostricacin-3 (40 aa).

3 cysteine pairs are disulfide-bonded: C8–C36, C15–C30, and C20–C37.

The protein resides in the secreted. In terms of biological role, has antibacterial activity against the Gram-positive bacterium S.aureus 1056 MRSA (MIC=2.78 ug/ml) and the Gram-negative bacterium E.coli O157:H7 (MIC=2.41 ug/ml). Does not have antifungal activity against the yeast C.albicans 3153A. In Struthio camelus (Common ostrich), this protein is Ostricacin-3.